The sequence spans 219 residues: Polysialic acid transport ATP-binding protein KpsT (219 aa).

The region spanning isoleucine 2 to aspartate 218 is the ABC transporter domain. Glycine 38–serine 45 provides a ligand contact to ATP.

Belongs to the ABC transporter superfamily.

The protein resides in the cell inner membrane. In terms of biological role, putative ATP-binding protein, and an energy coupling component for the transport of polysialic acid across the cytoplasmic membrane. The sequence is that of Polysialic acid transport ATP-binding protein KpsT (kpsT) from Escherichia coli.